The chain runs to 370 residues: 3-dehydroquinate synthase (370 aa).

NAD(+) contacts are provided by residues 112-116, 136-137, lysine 149, lysine 158, and 176-179; these read GVVGD, TS, and TLRT. 3 residues coordinate Zn(2+): glutamate 191, histidine 254, and histidine 276.

The protein belongs to the sugar phosphate cyclases superfamily. Dehydroquinate synthase family. The cofactor is Co(2+). Requires Zn(2+) as cofactor. It depends on NAD(+) as a cofactor.

It localises to the cytoplasm. The catalysed reaction is 7-phospho-2-dehydro-3-deoxy-D-arabino-heptonate = 3-dehydroquinate + phosphate. It participates in metabolic intermediate biosynthesis; chorismate biosynthesis; chorismate from D-erythrose 4-phosphate and phosphoenolpyruvate: step 2/7. Its function is as follows. Catalyzes the conversion of 3-deoxy-D-arabino-heptulosonate 7-phosphate (DAHP) to dehydroquinate (DHQ). This Xanthomonas oryzae pv. oryzae (strain PXO99A) protein is 3-dehydroquinate synthase.